A 564-amino-acid chain; its full sequence is Probable metalloprotease ARX1 (564 aa).

Belongs to the peptidase M24 family. In terms of assembly, component of the nucleoplasmic and cytoplasmic pre-60S ribosomal particles.

It is found in the cytoplasm. The protein resides in the nucleus. Functionally, probable metalloprotease involved in proper assembly of pre-ribosomal particles during the biogenesis of the 60S ribosomal subunit. Accompanies the pre-60S particles to the cytoplasm. This is Probable metalloprotease ARX1 (ARX1) from Candida albicans (strain SC5314 / ATCC MYA-2876) (Yeast).